Here is a 104-residue protein sequence, read N- to C-terminus: uncharacterized protein (104 aa).

Residues 1 to 24 (MISTEKSSDAVAMHCPSGDQHNSE) form a disordered region.

This is an uncharacterized protein from Saccharomyces cerevisiae (strain ATCC 204508 / S288c) (Baker's yeast).